A 638-amino-acid chain; its full sequence is Threonine--tRNA ligase (638 aa).

The TGS domain maps to 1-61 (MPLITLPDGN…DKDCSVKIFT (61 aa)). The interval 243-535 (DHRKLGKEMD…LIENYAGKFP (293 aa)) is catalytic. Zn(2+) contacts are provided by Cys-335, His-386, and His-512.

This sequence belongs to the class-II aminoacyl-tRNA synthetase family. Homodimer. Zn(2+) serves as cofactor.

Its subcellular location is the cytoplasm. It carries out the reaction tRNA(Thr) + L-threonine + ATP = L-threonyl-tRNA(Thr) + AMP + diphosphate + H(+). Functionally, catalyzes the attachment of threonine to tRNA(Thr) in a two-step reaction: L-threonine is first activated by ATP to form Thr-AMP and then transferred to the acceptor end of tRNA(Thr). Also edits incorrectly charged L-seryl-tRNA(Thr). In Pelagibacter ubique (strain HTCC1062), this protein is Threonine--tRNA ligase.